The chain runs to 240 residues: Probable transcriptional regulatory protein HPAG1_0159 (240 aa).

Belongs to the TACO1 family.

Its subcellular location is the cytoplasm. This is Probable transcriptional regulatory protein HPAG1_0159 from Helicobacter pylori (strain HPAG1).